Reading from the N-terminus, the 129-residue chain is Large ribosomal subunit protein bL20 (129 aa).

It belongs to the bacterial ribosomal protein bL20 family.

Its function is as follows. Binds directly to 23S ribosomal RNA and is necessary for the in vitro assembly process of the 50S ribosomal subunit. It is not involved in the protein synthesizing functions of that subunit. This is Large ribosomal subunit protein bL20 from Mycolicibacterium gilvum (strain PYR-GCK) (Mycobacterium gilvum (strain PYR-GCK)).